The primary structure comprises 107 residues: uncharacterized protein (107 aa).

The disordered stretch occupies residues 23–64; that stretch reads SASSSSSTRIPSGFASATSSKSNSSTKSSPSPINSFNNKTNN. Residues 37-57 are compositionally biased toward low complexity; that stretch reads ASATSSKSNSSTKSSPSPINS. Residues 76–98 traverse the membrane as a helical segment; it reads LAFGIVEFMVFNGMISTITTTTF.

The protein localises to the membrane. This is an uncharacterized protein from Dictyostelium discoideum (Social amoeba).